Consider the following 155-residue polypeptide: Large ribosomal subunit protein uL30 (155 aa).

It belongs to the universal ribosomal protein uL30 family. Part of the 50S ribosomal subunit.

The sequence is that of Large ribosomal subunit protein uL30 from Nitrosopumilus maritimus (strain SCM1).